Consider the following 286-residue polypeptide: Mating type protein A-1 (286 aa).

A DNA-binding region (alpha box) is located at residues 40–95; that stretch reads AAKKKVNGFMSFRSYYSPLFSQLPQKERSPFMTILWQHDPFHNEWNFMCSVYSSIR.

This sequence belongs to the MATALPHA1 family.

It is found in the nucleus. Its function is as follows. Required for expression of the heterokaryon incompatibility and sexual functions. This is Mating type protein A-1 (MTA-1) from Neurospora africana.